The primary structure comprises 376 residues: Inactive CLIP domain-containing serine protease A28 (376 aa).

The signal sequence occupies residues 1-19 (MKVLLFCIVISLTTLIASG). The region spanning 24 to 80 (EELRCPGGYCVSKYLCPNGTFIDDIKHAQTTQLIGLRAGLDIDDFDDCNDYLLVCCQ) is the Clip domain. 3 disulfide bridges follow: cysteine 28–cysteine 78, cysteine 33–cysteine 71, and cysteine 39–cysteine 79. An N-linked (GlcNAc...) asparagine glycan is attached at asparagine 41. Positions 85–106 (PTATSTEKPATSDELIEPPPST) are disordered. The Peptidase S1 domain occupies 114–364 (NEGGLIYDLR…YVQWLNEHIV (251 aa)). Asparagine 125 and asparagine 279 each carry an N-linked (GlcNAc...) asparagine glycan. 3 disulfide bridges follow: cysteine 251/cysteine 321, cysteine 280/cysteine 301, and cysteine 311/cysteine 340. A glycan (N-linked (GlcNAc...) asparagine) is linked at asparagine 369.

This sequence belongs to the peptidase S1 family. CLIP subfamily. In terms of assembly, may form a heterodimer of a light chain and a heavy chain; disulfide-linked. Secreted as a full-length protein. Proteolytically cleaved into two chains which probably remain covalently linked. Cleavage is induced by fungus B.bassiana and Gram-positive or Gram-negative bacteria infection.

Its subcellular location is the secreted. Its function is as follows. Inactive serine protease which plays an essential role in the innate immune response against bacteria, fungi and protozoa infection by activating the melanization cascade. In the melanization cascade, acts downstream of TEP1, SPCLIP1 and CLIPA8 to promote CLIPC9 proteolytic cleavage. In the susceptible strain G3, appears to be dispensable for parasite P.berghei ookinete elimination which occurs by lysis. Required for the melanization of Gram-positive and Gram-negative bacteria. Required for the melanization of fungus B.bassiana. The chain is Inactive CLIP domain-containing serine protease A28 from Anopheles gambiae (African malaria mosquito).